The following is a 210-amino-acid chain: Glycerol-3-phosphate acyltransferase (210 aa).

Transmembrane regions (helical) follow at residues 8 to 28 (LILL…LLLT), 56 to 76 (GLAA…VLIA), 87 to 107 (TMAV…WLGF), 119 to 139 (TIWV…LLVA), 144 to 164 (ISSA…VLLS), and 165 to 185 (GRPL…LIWA).

Belongs to the PlsY family. Probably interacts with PlsX.

Its subcellular location is the cell inner membrane. It carries out the reaction an acyl phosphate + sn-glycerol 3-phosphate = a 1-acyl-sn-glycero-3-phosphate + phosphate. The protein operates within lipid metabolism; phospholipid metabolism. Functionally, catalyzes the transfer of an acyl group from acyl-phosphate (acyl-PO(4)) to glycerol-3-phosphate (G3P) to form lysophosphatidic acid (LPA). This enzyme utilizes acyl-phosphate as fatty acyl donor, but not acyl-CoA or acyl-ACP. This is Glycerol-3-phosphate acyltransferase from Gluconobacter oxydans (strain 621H) (Gluconobacter suboxydans).